We begin with the raw amino-acid sequence, 431 residues long: Adenylosuccinate synthetase (431 aa).

Residues Gly-13–Lys-19 and Gly-41–Thr-43 contribute to the GTP site. Asp-14 acts as the Proton acceptor in catalysis. Mg(2+) is bound by residues Asp-14 and Gly-41. Residues Asp-14–Lys-17, Asn-39–His-42, Thr-130, Arg-144, Gln-225, Thr-240, and Arg-304 each bind IMP. Residue His-42 is the Proton donor of the active site. Position 300–306 (Ala-300–Arg-306) interacts with substrate. GTP-binding positions include Arg-306, Lys-332 to Asp-334, and Ser-415 to Gly-417.

Belongs to the adenylosuccinate synthetase family. As to quaternary structure, homodimer. It depends on Mg(2+) as a cofactor.

The protein resides in the cytoplasm. It carries out the reaction IMP + L-aspartate + GTP = N(6)-(1,2-dicarboxyethyl)-AMP + GDP + phosphate + 2 H(+). The protein operates within purine metabolism; AMP biosynthesis via de novo pathway; AMP from IMP: step 1/2. Its function is as follows. Plays an important role in the de novo pathway of purine nucleotide biosynthesis. Catalyzes the first committed step in the biosynthesis of AMP from IMP. In Shewanella oneidensis (strain ATCC 700550 / JCM 31522 / CIP 106686 / LMG 19005 / NCIMB 14063 / MR-1), this protein is Adenylosuccinate synthetase.